A 344-amino-acid polypeptide reads, in one-letter code: Dihydroorotase (344 aa).

His14 and His16 together coordinate Zn(2+). Substrate is bound by residues 16–18 and Asn42; that span reads HLR. Positions 100, 137, and 175 each coordinate Zn(2+). Lys100 carries the post-translational modification N6-carboxylysine. A substrate-binding site is contributed by His137. Residue Leu220 participates in substrate binding. Asp248 is a binding site for Zn(2+). Asp248 is a catalytic residue. Positions 252 and 264 each coordinate substrate.

Belongs to the metallo-dependent hydrolases superfamily. DHOase family. Class II DHOase subfamily. Homodimer. Zn(2+) serves as cofactor.

The enzyme catalyses (S)-dihydroorotate + H2O = N-carbamoyl-L-aspartate + H(+). Its pathway is pyrimidine metabolism; UMP biosynthesis via de novo pathway; (S)-dihydroorotate from bicarbonate: step 3/3. Catalyzes the reversible cyclization of carbamoyl aspartate to dihydroorotate. The chain is Dihydroorotase from Cupriavidus taiwanensis (strain DSM 17343 / BCRC 17206 / CCUG 44338 / CIP 107171 / LMG 19424 / R1) (Ralstonia taiwanensis (strain LMG 19424)).